Consider the following 181-residue polypeptide: Isopentenyl-diphosphate Delta-isomerase (181 aa).

Residues His25 and His32 each contribute to the Mn(2+) site. The region spanning 30 to 164 (PLHLAFSCWL…PWAFSPWMVM (135 aa)) is the Nudix hydrolase domain. Cys67 is an active-site residue. A Mn(2+)-binding site is contributed by His69. Glu87 contributes to the Mg(2+) binding site. Residues Glu114 and Glu116 each coordinate Mn(2+). Glu116 is a catalytic residue.

Belongs to the IPP isomerase type 1 family. In terms of assembly, homodimer. Mg(2+) is required as a cofactor. The cofactor is Mn(2+).

The protein localises to the cytoplasm. It catalyses the reaction isopentenyl diphosphate = dimethylallyl diphosphate. It participates in isoprenoid biosynthesis; dimethylallyl diphosphate biosynthesis; dimethylallyl diphosphate from isopentenyl diphosphate: step 1/1. Its function is as follows. Catalyzes the 1,3-allylic rearrangement of the homoallylic substrate isopentenyl (IPP) to its highly electrophilic allylic isomer, dimethylallyl diphosphate (DMAPP). This is Isopentenyl-diphosphate Delta-isomerase from Salmonella agona (strain SL483).